The chain runs to 818 residues: Sorting nexin-29 (818 aa).

Positions 36–180 constitute an RUN domain; the sequence is SDSDSRVTCL…ILFAINIDNK (145 aa). The tract at residues 267 to 299 is disordered; it reads VSFDDDEEEQGTGDTLKKMPGTAESSEENSDRS. S268, S291, S292, S330, S344, S447, and S452 each carry phosphoserine. 2 disordered regions span residues 343-375 and 441-462; these read KSID…PDRT and RYRE…PSAS. The segment covering 445–462 has biased composition (low complexity); sequence ASSPGQGSPLSSLLPSAS. A coiled-coil region spans residues 467-547; sequence MTVHELRQAI…VLKVQLKKYV (81 aa). A Phosphoserine modification is found at S642. T644 carries the post-translational modification Phosphothreonine. 2 positions are modified to phosphoserine: S645 and S649. A PX domain is found at 659–782; that stretch reads ALINVWIPSV…PFFVDITPPG (124 aa). The interval 781-818 is disordered; the sequence is PGEPLNKSSRPKAVSRFPKLSRGHPREVRNVEPQSGDL.

The protein belongs to the sorting nexin family.

This chain is Sorting nexin-29 (Snx29), found in Mus musculus (Mouse).